Consider the following 270-residue polypeptide: Probable septum site-determining protein MinC (270 aa).

Belongs to the MinC family. As to quaternary structure, interacts with MinD and FtsZ.

In terms of biological role, cell division inhibitor that blocks the formation of polar Z ring septums. Rapidly oscillates between the poles of the cell to destabilize FtsZ filaments that have formed before they mature into polar Z rings. Prevents FtsZ polymerization. The polypeptide is Probable septum site-determining protein MinC (Cupriavidus necator (strain ATCC 17699 / DSM 428 / KCTC 22496 / NCIMB 10442 / H16 / Stanier 337) (Ralstonia eutropha)).